A 207-amino-acid chain; its full sequence is Dephospho-CoA kinase (207 aa).

In terms of domain architecture, DPCK spans 4 to 203 (VIGLTGGIAS…EEGYIEKPNY (200 aa)). Position 12–17 (12–17 (ASGKST)) interacts with ATP.

It belongs to the CoaE family.

Its subcellular location is the cytoplasm. It catalyses the reaction 3'-dephospho-CoA + ATP = ADP + CoA + H(+). It functions in the pathway cofactor biosynthesis; coenzyme A biosynthesis; CoA from (R)-pantothenate: step 5/5. In terms of biological role, catalyzes the phosphorylation of the 3'-hydroxyl group of dephosphocoenzyme A to form coenzyme A. This chain is Dephospho-CoA kinase, found in Staphylococcus aureus (strain bovine RF122 / ET3-1).